We begin with the raw amino-acid sequence, 282 residues long: MKIVTTVQEMQHITKELRASGKSIGFVPTMGYLHEGHATLLRKAREENEIVVLSVFVNPLQFGPNEDLDRYPRDIDRDENVAKENGVDYLFYPSVEEMYPVEQTTTVEVVKRTDVLCGKQRPGHFAGVATVLMKLFNITLPTHAYFGMKDAQQVAVIEGFVADFNIPVTIVPVDIVREEDGLAKSSRNVYLSQEERKEAPHLYRSLCMAKERIEAGERNAEIITTLVKEYIETYTKGTVDYADLYAYPSLQVVDQIEGRIILAIAVKFENVRLIDNITLTVK.

Residue 30–37 (MGYLHEGH) participates in ATP binding. Histidine 37 (proton donor) is an active-site residue. Position 61 (glutamine 61) interacts with (R)-pantoate. A beta-alanine-binding site is contributed by glutamine 61. ATP is bound at residue 147–150 (GMKD). Glutamine 153 provides a ligand contact to (R)-pantoate. ATP is bound by residues valine 176 and 184–187 (KSSR).

It belongs to the pantothenate synthetase family. As to quaternary structure, homodimer.

The protein resides in the cytoplasm. It carries out the reaction (R)-pantoate + beta-alanine + ATP = (R)-pantothenate + AMP + diphosphate + H(+). Its pathway is cofactor biosynthesis; (R)-pantothenate biosynthesis; (R)-pantothenate from (R)-pantoate and beta-alanine: step 1/1. In terms of biological role, catalyzes the condensation of pantoate with beta-alanine in an ATP-dependent reaction via a pantoyl-adenylate intermediate. This Bacillus thuringiensis (strain Al Hakam) protein is Pantothenate synthetase.